A 378-amino-acid chain; its full sequence is Uroporphyrinogen decarboxylase (378 aa).

Substrate is bound by residues arginine 40 to arginine 44, aspartate 90, tyrosine 167, serine 222, and histidine 355.

It belongs to the uroporphyrinogen decarboxylase family. As to quaternary structure, homodimer.

The protein resides in the cytoplasm. It carries out the reaction uroporphyrinogen III + 4 H(+) = coproporphyrinogen III + 4 CO2. It participates in porphyrin-containing compound metabolism; protoporphyrin-IX biosynthesis; coproporphyrinogen-III from 5-aminolevulinate: step 4/4. Its function is as follows. Catalyzes the decarboxylation of four acetate groups of uroporphyrinogen-III to yield coproporphyrinogen-III. In Psychrobacter cryohalolentis (strain ATCC BAA-1226 / DSM 17306 / VKM B-2378 / K5), this protein is Uroporphyrinogen decarboxylase.